The following is a 129-amino-acid chain: Beta-galactoside-binding lectin (129 aa).

N-acetylserine is present on S1. One can recognise a Galectin domain in the interval G4–K129. W69–E75 serves as a coordination point for a beta-D-galactoside.

This protein binds beta-galactoside. Its physiological function is not yet known. The polypeptide is Beta-galactoside-binding lectin (Electrophorus electricus (Electric eel)).